Consider the following 1214-residue polypeptide: Receptor-type guanylate cyclase gcy-19 (1214 aa).

The signal sequence occupies residues 1–18 (MEHLIFLLIFGGYSPSIA). Topologically, residues 19–517 (QITSSTTTTT…PQTFVDQYGA (499 aa)) are extracellular. N-linked (GlcNAc...) asparagine glycosylation is found at Asn-85, Asn-363, Asn-441, and Asn-464. A helical membrane pass occupies residues 518–538 (LVFSIGGVLALAMLFLITCFF). Residues 539–1214 (YVLRQRKLER…FRRQETLALM (676 aa)) are Cytoplasmic-facing. The Protein kinase domain occupies 572–859 (RMSKRSIQSG…KGNLMDHVFN (288 aa)). One can recognise a Guanylate cyclase domain in the interval 917-1047 (TVFFSDVVKF…DTVNTASRME (131 aa)). The disordered stretch occupies residues 1116 to 1197 (NSSNMAYNPE…EKAREIHNEE (82 aa)). Positions 1133–1142 (DDEDVDDESS) are enriched in acidic residues. The segment covering 1186 to 1197 (LEEKAREIHNEE) has biased composition (basic and acidic residues).

This sequence belongs to the adenylyl cyclase class-4/guanylyl cyclase family. Expressed asymmetrically in ASE right (ASER) sensory neuron.

The protein resides in the cell membrane. It catalyses the reaction GTP = 3',5'-cyclic GMP + diphosphate. Guanylate cyclase involved in the production of the second messenger cGMP. The protein is Receptor-type guanylate cyclase gcy-19 of Caenorhabditis briggsae.